The following is a 172-amino-acid chain: Adenine phosphoribosyltransferase (172 aa).

Belongs to the purine/pyrimidine phosphoribosyltransferase family. Homodimer.

It localises to the cytoplasm. It carries out the reaction AMP + diphosphate = 5-phospho-alpha-D-ribose 1-diphosphate + adenine. Its pathway is purine metabolism; AMP biosynthesis via salvage pathway; AMP from adenine: step 1/1. Functionally, catalyzes a salvage reaction resulting in the formation of AMP, that is energically less costly than de novo synthesis. The protein is Adenine phosphoribosyltransferase of Staphylococcus aureus (strain Mu3 / ATCC 700698).